The chain runs to 257 residues: Leucine-rich repeat-containing protein 3 (257 aa).

The first 32 residues, 1-32, serve as a signal peptide directing secretion; sequence MGPRGRQSPSSPLAPSQGSCFFILFCLRLGAS. Positions 33 to 64 constitute an LRRNT domain; that stretch reads CPQSCQCPDHAGAVAVHCSSRGLQEIPRDIPA. 3 LRR repeats span residues 65–86, 89–110, and 114–135; these read NTVLLKLDANRISRVPNGAFQH, QLRELDLSHNAIEAIGPAAFSG, and GLRLLDLSHNRIRRIPKDALGK. The LRRCT domain occupies 145–198; sequence NPLHCECALQEALWELKLDPDSVDEIACHTSAQEQFVGKPLIQVLDSGASFCST. Residues 205–225 form a helical membrane-spanning segment; that stretch reads VAMLVTMFGWFTMVIAYVVYY.

This sequence belongs to the LRRC3 family.

It localises to the membrane. This Rattus norvegicus (Rat) protein is Leucine-rich repeat-containing protein 3 (Lrrc3).